The primary structure comprises 100 residues: Serine protease inhibitor 1 protein (100 aa).

A signal peptide spans 1–20 (MKHLLIVSLVFVTIIWKIEC). 5 disulfides stabilise this stretch: Cys-42–Cys-74, Cys-51–Cys-69, Cys-54–Cys-65, Cys-58–Cys-93, and Cys-76–Cys-90. Residues 42-93 (CGLNEVWMVCSSCEEECGKTPQPCPRICQPARCQCPAHKGYRRDGQGNCIFC) enclose the TIL domain.

The protein resides in the secreted. This chain is Serine protease inhibitor 1 protein, found in Caenorhabditis elegans.